Consider the following 284-residue polypeptide: Bifunctional protein FolD (284 aa).

Residues 166–168 (GAS) and Ile-232 each bind NADP(+).

It belongs to the tetrahydrofolate dehydrogenase/cyclohydrolase family. Homodimer.

The catalysed reaction is (6R)-5,10-methylene-5,6,7,8-tetrahydrofolate + NADP(+) = (6R)-5,10-methenyltetrahydrofolate + NADPH. The enzyme catalyses (6R)-5,10-methenyltetrahydrofolate + H2O = (6R)-10-formyltetrahydrofolate + H(+). It participates in one-carbon metabolism; tetrahydrofolate interconversion. Catalyzes the oxidation of 5,10-methylenetetrahydrofolate to 5,10-methenyltetrahydrofolate and then the hydrolysis of 5,10-methenyltetrahydrofolate to 10-formyltetrahydrofolate. The chain is Bifunctional protein FolD from Pseudomonas putida (strain W619).